The sequence spans 234 residues: MITIRIDSLIELMDRVAPPELALPGDRIGYHGPEIEVEAVLVLMDYLEDVAVDGYDLLVLHHPPEVEPPIPYLTVHSNWDVADGGACDALADALGLDVESFLDPDTGVDRICRADLSLEELLERTGVLNPETLRVVNPREYVDRVAVVSGFGLSDKSLIMRAWSEGVSAYLSGDLTHGPAILGRNMDLTLIDAGHHATEMPGLHRLREVIEDFGVMAELLDTGTPWSEYRAAYI.

The a divalent metal cation site is built by His-61, His-62, Asp-80, His-195, and Glu-199.

It belongs to the GTP cyclohydrolase I type 2/NIF3 family. Homohexamer.

The polypeptide is GTP cyclohydrolase 1 type 2 homolog (Methanothermobacter thermautotrophicus (strain ATCC 29096 / DSM 1053 / JCM 10044 / NBRC 100330 / Delta H) (Methanobacterium thermoautotrophicum)).